The chain runs to 338 residues: Phenylalanine--tRNA ligase alpha subunit (338 aa).

Mg(2+) is bound at residue glutamate 252.

This sequence belongs to the class-II aminoacyl-tRNA synthetase family. Phe-tRNA synthetase alpha subunit type 1 subfamily. As to quaternary structure, tetramer of two alpha and two beta subunits. It depends on Mg(2+) as a cofactor.

It localises to the cytoplasm. It carries out the reaction tRNA(Phe) + L-phenylalanine + ATP = L-phenylalanyl-tRNA(Phe) + AMP + diphosphate + H(+). This chain is Phenylalanine--tRNA ligase alpha subunit, found in Pseudomonas aeruginosa (strain UCBPP-PA14).